Here is a 142-residue protein sequence, read N- to C-terminus: Arginine decarboxylase proenzyme (142 aa).

The active-site Schiff-base intermediate with substrate; via pyruvic acid is S81. The residue at position 81 (S81) is a Pyruvic acid (Ser); by autocatalysis. H86 serves as the catalytic Proton acceptor; for processing activity. Catalysis depends on C101, which acts as the Proton donor; for catalytic activity.

Belongs to the prokaryotic AdoMetDC family. Type 1 subfamily. In terms of assembly, heterooctamer of four alpha and four beta chains arranged as a tetramer of alpha/beta heterodimers. Pyruvate serves as cofactor. Is synthesized initially as an inactive proenzyme. Formation of the active enzyme involves a self-maturation process in which the active site pyruvoyl group is generated from an internal serine residue via an autocatalytic post-translational modification. Two non-identical subunits are generated from the proenzyme in this reaction, and the pyruvate is formed at the N-terminus of the alpha chain, which is derived from the carboxyl end of the proenzyme. The post-translation cleavage follows an unusual pathway, termed non-hydrolytic serinolysis, in which the side chain hydroxyl group of the serine supplies its oxygen atom to form the C-terminus of the beta chain, while the remainder of the serine residue undergoes an oxidative deamination to produce ammonia and the pyruvoyl group blocking the N-terminus of the alpha chain.

It catalyses the reaction L-arginine + H(+) = agmatine + CO2. Its pathway is amine and polyamine biosynthesis; agmatine biosynthesis; agmatine from L-arginine: step 1/1. Its function is as follows. Specifically catalyzes the decarboxylation of L-arginine to agmatine. Has no S-adenosylmethionine decarboxylase (AdoMetDC) activity. This chain is Arginine decarboxylase proenzyme, found in Hyperthermus butylicus (strain DSM 5456 / JCM 9403 / PLM1-5).